A 327-amino-acid polypeptide reads, in one-letter code: Thiosulfate dehydrogenase (327 aa).

A signal peptide spans 1–26; it reads MKIIPYRKRSVLIATIFAISAVGITG. Residues 66-78 are compositionally biased toward low complexity; sequence NDMTATAGGTDTA. A disordered region spans residues 66–93; the sequence is NDMTATAGGTDTASGKPTIKMPDESTIP. Cytochrome c domains are found at residues 99–196 and 219–305; these read AAVR…SWLS and PNTD…THLP. The heme c site is built by cysteine 125, cysteine 128, histidine 129, cysteine 232, cysteine 235, and histidine 236.

As to quaternary structure, monomer. In terms of processing, binds 2 heme c groups covalently per subunit.

The protein resides in the periplasm. The catalysed reaction is 2 thiosulfate + 2 Fe(III)-[cytochrome c] = tetrathionate + 2 Fe(II)-[cytochrome c] + 2 H(+). Its function is as follows. Catalyzes the oxidation of 2 molecules of thiosulfate to tetrathionate. In Psychrobacter arcticus (strain DSM 17307 / VKM B-2377 / 273-4), this protein is Thiosulfate dehydrogenase (tsdA).